Consider the following 578-residue polypeptide: MGEIERPRSLSRITVHSDAEYLDAYDHVTYSNSLELLDTIAETQITLNLFMNNKFELAEERMAELYDKSMYHSMGYTCILFIKAVMTVNKQDMEKAAEASKLSCEIIEKFRERRSIKETIFGASAKGKKMTDEELHAELCYAQSLLIRAMLTFFHDDNFASFIKGALNIRTCYQTYRYCEKLMNEPSVWVGRNKKVQEQFESGTRMGLGTFSLMLSVLPSKVLRLLEVVGFSGDKVAGMRDLHHVASMTGTLCSPLAKMVLLTWHLIISFVLGTGQPDLEVCKRLMPGLTHLWPRGAIMLFMKARLLLISGDIEAAIHYFNMSIESQDVYKQFHHGCYWELLFAHGYQRRWSHSANYARLLMKESKWSRCVYTYLLCIFFAADETVEEGRRNETINALAGKVDGLRIRIAGKSIPVEKYCGRKAKRFTTTNSLLFAHYEFIYFWNGFDIFGKNSKMVRGIVEDMDRVWEMKKSTCDIDDYCLYYFLKGVALRHLSLHAQAEECFKIVLERESSIKSFTYLPPNATYELAMLRISEQQFMEAQTLLDKARAYKSYSLENKLHFRIHSAMGTMGCRTPMM.

TPR repeat units lie at residues 297–330, 481–514, and 522–554; these read AIMLFMKARLLLISGDIEAAIHYFNMSIESQDVY, CLYYFLKGVALRHLSLHAQAEECFKIVLERESSI, and PNATYELAMLRISEQQFMEAQTLLDKARAYKSY.

In Caenorhabditis elegans, this protein is Tetratricopeptide repeat protein ttc-39B.